The primary structure comprises 70 residues: Large ribosomal subunit protein bL32 (70 aa).

Residues 1 to 19 (MAVPKKKTSPSRRGMRRSH) are compositionally biased toward basic residues. A disordered region spans residues 1–21 (MAVPKKKTSPSRRGMRRSHQA).

Belongs to the bacterial ribosomal protein bL32 family.

In Granulibacter bethesdensis (strain ATCC BAA-1260 / CGDNIH1), this protein is Large ribosomal subunit protein bL32.